The chain runs to 277 residues: Shikimate dehydrogenase (NADP(+)) (277 aa).

Residues 18–20 (SKS) and threonine 65 each bind shikimate. The active-site Proton acceptor is lysine 69. Residue glutamate 81 coordinates NADP(+). The shikimate site is built by asparagine 90 and aspartate 106. NADP(+) is bound by residues 130 to 134 (GAGGA), 154 to 159 (NRTFSK), and methionine 217. Tyrosine 219 lines the shikimate pocket. Glycine 241 lines the NADP(+) pocket.

Belongs to the shikimate dehydrogenase family. In terms of assembly, homodimer.

The catalysed reaction is shikimate + NADP(+) = 3-dehydroshikimate + NADPH + H(+). Its pathway is metabolic intermediate biosynthesis; chorismate biosynthesis; chorismate from D-erythrose 4-phosphate and phosphoenolpyruvate: step 4/7. Involved in the biosynthesis of the chorismate, which leads to the biosynthesis of aromatic amino acids. Catalyzes the reversible NADPH linked reduction of 3-dehydroshikimate (DHSA) to yield shikimate (SA). The chain is Shikimate dehydrogenase (NADP(+)) from Vibrio vulnificus (strain CMCP6).